A 499-amino-acid polypeptide reads, in one-letter code: E3 ubiquitin-protein ligase TRIM69 (499 aa).

Positions 1 to 152 (MEVSSRPPSN…SMGQSKDFLQ (152 aa)) are necessary for nuclear localization. The RING-type zinc-finger motif lies at 41–82 (CPLCNDWFRDPLMLTCGHNFCQACIQNYWKMQAKETFCPECK). The stretch at 160 to 265 (FTEELAIYQS…NIQARMEQQN (106 aa)) forms a coiled coil. In terms of domain architecture, B30.2/SPRY spans 305 to 499 (PIQYTIWREM…KEPLHIVHPQ (195 aa)). Serine 341 is subject to Phosphoserine.

This sequence belongs to the TRIM/RBCC family. In terms of assembly, homo-multimer; required for antiviral activity. Interacts with PML. Phosphorylated. Phosphorylation is necessary for nuclear localization.

The protein localises to the cytoplasm. It is found in the nucleus. The protein resides in the nucleus speckle. It localises to the cytoskeleton. Its subcellular location is the microtubule organizing center. The protein localises to the centrosome. It carries out the reaction S-ubiquitinyl-[E2 ubiquitin-conjugating enzyme]-L-cysteine + [acceptor protein]-L-lysine = [E2 ubiquitin-conjugating enzyme]-L-cysteine + N(6)-ubiquitinyl-[acceptor protein]-L-lysine.. The protein operates within protein modification; protein ubiquitination. Functionally, E3 ubiquitin ligase that plays an important role in antiviral immunity by restricting different viral infections including dengue virus or vesicular stomatitis indiana virus. Ubiquitinates viral proteins such as dengue virus NS3 thereby limiting infection. In addition, acts as a key mediator of type I interferon induced microtubule stabilization by directly associating to microtubules independently of its E3 ligase activity. Also plays a role in cataract formation together with TP53. Mechanistically, inhibits UVB-induced cell apoptosis and reactive oxygen species (ROS) production by inducing TP53 ubiquitination. Regulates centrosome dynamics and mitotic progression by ubiquitinating STK3/MST2; leading to its redistribution to the perinuclear cytoskeleton and subsequent phosphorylation by PLK1. In Rattus norvegicus (Rat), this protein is E3 ubiquitin-protein ligase TRIM69 (Trim69).